The following is a 520-amino-acid chain: MTHTAHPDSVLIVDFGSQVTQLIARRVREAGVYCEIVPFQSAEEGFKRLQPKAVILSGSPASTVDEGSPRAPQIIFDSGLPVFGICYGQQTMCMQLGGKVESGHHREFGRAFLDVDKDCQLFEGLWSSGSRHQVWMSHGDRVTALPDGFEVVATSSNAPFAFIADEKRKYYGVQFHPEVVHTPDGAKLIGNFIHNIAGIKGDWSMSAYRQKAVDEIRKQVGDKRVICALSGGVDSSVAALLIHEAVGDQLTCILVDHGLMRKDEAANVVAMFREHYNLHLLHVDASDRFIGELEGVSDPETKRKIIGRLFIETFEEEAKKLGGADFLGQGTLYPDVIESVSFTGGPSVTIKSHHNVGGLPERMKMQLVEPLRELFKDEVRALGRELGLPDSFIGRHPFPGPGLAIRCPGGISREKLEILREADAIYLDEIRKAGLYDAIWQAFAVLLPVQTVGVMGDGRTYEFVCALRAVTSVDGMTADFYHYDMEFLGRAATRIINEVRGINRVVYDVTSKPPGTIEWE.

The region spanning 9–202 (SVLIVDFGSQ…IHNIAGIKGD (194 aa)) is the Glutamine amidotransferase type-1 domain. The active-site Nucleophile is cysteine 86. Residues histidine 176 and glutamate 178 contribute to the active site. The 193-residue stretch at 203–395 (WSMSAYRQKA…LGLPDSFIGR (193 aa)) folds into the GMPS ATP-PPase domain. 230-236 (SGGVDSS) is an ATP binding site.

In terms of assembly, homodimer.

It catalyses the reaction XMP + L-glutamine + ATP + H2O = GMP + L-glutamate + AMP + diphosphate + 2 H(+). Its pathway is purine metabolism; GMP biosynthesis; GMP from XMP (L-Gln route): step 1/1. In terms of biological role, catalyzes the synthesis of GMP from XMP. The chain is GMP synthase [glutamine-hydrolyzing] from Rhizobium etli (strain CIAT 652).